Here is a 556-residue protein sequence, read N- to C-terminus: Beta-caryophyllene synthase TPS9FN (556 aa).

(2E,6E)-farnesyl diphosphate is bound by residues R273, D310, D314, R451, and D454. Mg(2+)-binding residues include D310 and D314. The DDXXD motif signature appears at D310–D314. Mg(2+)-binding residues include D454, S458, and E462.

This sequence belongs to the terpene synthase family. Tpsb subfamily. Mg(2+) is required as a cofactor. It depends on Mn(2+) as a cofactor. Expressed in glandular trichomes two to four weeks after flowering onset.

It catalyses the reaction (2E,6E)-farnesyl diphosphate = (-)-(E)-beta-caryophyllene + diphosphate. It carries out the reaction (2E,6E)-farnesyl diphosphate = alpha-humulene + diphosphate. Its pathway is secondary metabolite biosynthesis; terpenoid biosynthesis. In terms of biological role, involved in sesquiterpene olefins biosynthesis, constituants of cannabinoids and terpenoids-rich resins. Catalyzes mainly the conversion of (2E)-farnesyl diphosphate to beta-caryophyllene and alpha-humulene. Can also use (2E)-geranyl diphosphate as substrate with low efficiency. In Cannabis sativa (Hemp), this protein is Beta-caryophyllene synthase TPS9FN.